The chain runs to 644 residues: Exoribonuclease 2 (644 aa).

The RNB domain occupies 189 to 516 (RQDLTALNFV…NHRLLKAVIK (328 aa)). Residues 561–643 (NTRFAAEIID…ETRSIIARPA (83 aa)) enclose the S1 motif domain.

The protein belongs to the RNR ribonuclease family. RNase II subfamily.

It is found in the cytoplasm. The enzyme catalyses Exonucleolytic cleavage in the 3'- to 5'-direction to yield nucleoside 5'-phosphates.. Functionally, involved in mRNA degradation. Hydrolyzes single-stranded polyribonucleotides processively in the 3' to 5' direction. The polypeptide is Exoribonuclease 2 (Salmonella enteritidis PT4 (strain P125109)).